Reading from the N-terminus, the 828-residue chain is Beta-galactosidase (828 aa).

Positions 1 to 20 are cleaved as a signal peptide; it reads MKMKQFNLLSLFLILITSFG. N-linked (GlcNAc...) asparagine glycans are attached at residues Asn-23 and Asn-153. Glu-183 serves as the catalytic Proton donor. Glu-252 (nucleophile) is an active-site residue. Residues Asn-253, Asn-350, Asn-379, Asn-492, Asn-667, Asn-799, and Asn-803 are each glycosylated (N-linked (GlcNAc...) asparagine). The 87-residue stretch at 742–828 folds into the SUEL-type lectin domain; sequence AHEHNKVELS…PKRLFVEVEC (87 aa).

This sequence belongs to the glycosyl hydrolase 35 family.

It is found in the secreted. The protein localises to the extracellular space. Its subcellular location is the apoplast. It carries out the reaction Hydrolysis of terminal non-reducing beta-D-galactose residues in beta-D-galactosides.. This Brassica oleracea (Wild cabbage) protein is Beta-galactosidase.